The primary structure comprises 374 residues: Erythronate-4-phosphate dehydrogenase (374 aa).

The substrate site is built by S45 and T67. D147 is a binding site for NAD(+). Residue R208 is part of the active site. D232 is an NAD(+) binding site. E237 is an active-site residue. H254 functions as the Proton donor in the catalytic mechanism. An NAD(+)-binding site is contributed by G257.

This sequence belongs to the D-isomer specific 2-hydroxyacid dehydrogenase family. PdxB subfamily. In terms of assembly, homodimer.

It is found in the cytoplasm. It carries out the reaction 4-phospho-D-erythronate + NAD(+) = (R)-3-hydroxy-2-oxo-4-phosphooxybutanoate + NADH + H(+). Its pathway is cofactor biosynthesis; pyridoxine 5'-phosphate biosynthesis; pyridoxine 5'-phosphate from D-erythrose 4-phosphate: step 2/5. Catalyzes the oxidation of erythronate-4-phosphate to 3-hydroxy-2-oxo-4-phosphonooxybutanoate. The protein is Erythronate-4-phosphate dehydrogenase of Pseudoalteromonas atlantica (strain T6c / ATCC BAA-1087).